Here is a 233-residue protein sequence, read N- to C-terminus: Putative N-acetylmuramoyl-L-alanine amidase (233 aa).

Residues 1-219 (MIDPGHGGQD…IANAIYIALK (219 aa)) enclose the MurNAc-LAA domain.

The protein belongs to the N-acetylmuramoyl-L-alanine amidase 3 family.

Its subcellular location is the secreted. The catalysed reaction is Hydrolyzes the link between N-acetylmuramoyl residues and L-amino acid residues in certain cell-wall glycopeptides.. Its function is as follows. Cell-wall hydrolase involved in septum cleavage during cell division. In Buchnera aphidicola subsp. Schizaphis graminum (strain Sg), this protein is Putative N-acetylmuramoyl-L-alanine amidase (amiB).